The chain runs to 324 residues: MALTNRLLMNSSALLRSSTLPLAVTSSRQAHAAHNTVINFVPQQEAWVVERMGKFYKILEPGLNFLLPIIDKIKFVQNLREIAIEIPEQGAITIDNVQLRLDGVLYLRVFDPYKASYGVDDPEFAVTQLAQTTMRSEVGKINLDTVFKERELLNENIVFAINKASAPWGIQCMRYEIRDMQMPSKIQEAMQMQVEAERKKRAAILESEGIREAAINRAEGDKKSAILASEAVQAERINVAKGEAEAVILKAESRAKAIERIALALEKDGGANAAGLTVAEQYVGAFGNLAKESNTVVLPANLSDPGSMVSQALAVYDSLSNKKK.

The protein belongs to the band 7/mec-2 family. Widely expressed in most tissues, including body wall muscles, intestinal epithelia, and pharynx and head neurons.

It localises to the mitochondrion. Its function is as follows. Mitochondrial protein that probably regulates the biogenesis and the activity of mitochondria. In neurons, involved in mitochondrial fusion and recovery of normal locomotory behavior during reoxygenation; probably acts independently of egl-9 and the canonical hypoxia response pathway. The protein is Stomatin-like protein stl-1 of Caenorhabditis elegans.